We begin with the raw amino-acid sequence, 234 residues long: Sugar fermentation stimulation protein A (234 aa).

Residues 201-220 (LLSEAQNKGVEVLAYKAELS) constitute a DNA-binding region (H-T-H motif).

It belongs to the SfsA family.

Functionally, binds to DNA non-specifically. Could be a regulatory factor involved in maltose metabolism. This chain is Sugar fermentation stimulation protein A, found in Salmonella typhi.